Consider the following 495-residue polypeptide: Formin-like protein 17 (495 aa).

The segment at 1 to 92 is disordered; sequence MDIRELIDIT…HNLKGQGQTR (92 aa). Residues 19–29 show a composition bias toward pro residues; the sequence is GPPPPPPPPLL. Residues 30-39 show a composition bias toward low complexity; that stretch reads QPHHSALSSS. The 401-residue stretch at 86–486 folds into the FH2 domain; that stretch reads KGQGQTRKAN…RAQKEAENEK (401 aa).

This sequence belongs to the formin-like family. Class-II subfamily.

The sequence is that of Formin-like protein 17 (FH17) from Arabidopsis thaliana (Mouse-ear cress).